A 457-amino-acid polypeptide reads, in one-letter code: Arginine biosynthesis bifunctional protein ArgJ, mitochondrial (457 aa).

Substrate is bound by residues Thr184, Lys213, Thr224, Glu312, Asn452, and Thr457. Residue Thr224 is the Nucleophile of the active site.

The protein belongs to the ArgJ family. In terms of assembly, heterodimer of an alpha and a beta chain. The alpha and beta chains are autoproteolytically processed from a single precursor protein within the mitochondrion.

The protein localises to the mitochondrion matrix. The catalysed reaction is N(2)-acetyl-L-ornithine + L-glutamate = N-acetyl-L-glutamate + L-ornithine. It catalyses the reaction L-glutamate + acetyl-CoA = N-acetyl-L-glutamate + CoA + H(+). Its pathway is amino-acid biosynthesis; L-arginine biosynthesis; L-ornithine and N-acetyl-L-glutamate from L-glutamate and N(2)-acetyl-L-ornithine (cyclic): step 1/1. The protein operates within amino-acid biosynthesis; L-arginine biosynthesis; N(2)-acetyl-L-ornithine from L-glutamate: step 1/4. Its function is as follows. Catalyzes two activities which are involved in the cyclic version of arginine biosynthesis: the synthesis of acetylglutamate from glutamate and acetyl-CoA, and of ornithine by transacetylation between acetylornithine and glutamate. The sequence is that of Arginine biosynthesis bifunctional protein ArgJ, mitochondrial from Aspergillus terreus (strain NIH 2624 / FGSC A1156).